We begin with the raw amino-acid sequence, 365 residues long: Probable dual-specificity RNA methyltransferase RlmN (365 aa).

The active-site Proton acceptor is Glu-108. The 239-residue stretch at 114–352 (YPDRNTVCIS…SCTVRDTRGR (239 aa)) folds into the Radical SAM core domain. An intrachain disulfide couples Cys-121 to Cys-358. [4Fe-4S] cluster is bound by residues Cys-128, Cys-132, and Cys-135. Residues 179–180 (GE), Ser-213, 236–238 (SLH), and Asn-315 contribute to the S-adenosyl-L-methionine site. Catalysis depends on Cys-358, which acts as the S-methylcysteine intermediate.

It belongs to the radical SAM superfamily. RlmN family. [4Fe-4S] cluster is required as a cofactor.

Its subcellular location is the cytoplasm. It catalyses the reaction adenosine(2503) in 23S rRNA + 2 reduced [2Fe-2S]-[ferredoxin] + 2 S-adenosyl-L-methionine = 2-methyladenosine(2503) in 23S rRNA + 5'-deoxyadenosine + L-methionine + 2 oxidized [2Fe-2S]-[ferredoxin] + S-adenosyl-L-homocysteine. It carries out the reaction adenosine(37) in tRNA + 2 reduced [2Fe-2S]-[ferredoxin] + 2 S-adenosyl-L-methionine = 2-methyladenosine(37) in tRNA + 5'-deoxyadenosine + L-methionine + 2 oxidized [2Fe-2S]-[ferredoxin] + S-adenosyl-L-homocysteine. Its function is as follows. Specifically methylates position 2 of adenine 2503 in 23S rRNA and position 2 of adenine 37 in tRNAs. This Mycolicibacterium vanbaalenii (strain DSM 7251 / JCM 13017 / BCRC 16820 / KCTC 9966 / NRRL B-24157 / PYR-1) (Mycobacterium vanbaalenii) protein is Probable dual-specificity RNA methyltransferase RlmN.